The sequence spans 306 residues: tRNA dimethylallyltransferase (306 aa).

ATP is bound at residue 12–19 (GPTAAGKT). 14-19 (TAAGKT) is a substrate binding site. Interaction with substrate tRNA regions lie at residues 37 to 40 (DSAL), 161 to 165 (QRINR), and 242 to 247 (RCVGYR).

The protein belongs to the IPP transferase family. Monomer. It depends on Mg(2+) as a cofactor.

The enzyme catalyses adenosine(37) in tRNA + dimethylallyl diphosphate = N(6)-dimethylallyladenosine(37) in tRNA + diphosphate. In terms of biological role, catalyzes the transfer of a dimethylallyl group onto the adenine at position 37 in tRNAs that read codons beginning with uridine, leading to the formation of N6-(dimethylallyl)adenosine (i(6)A). This Pseudoalteromonas translucida (strain TAC 125) protein is tRNA dimethylallyltransferase.